A 548-amino-acid polypeptide reads, in one-letter code: uncharacterized protein (548 aa).

Residues 8–200 (KLFADMIIQG…LLCVYEGFLK (193 aa)) enclose the DhaL domain.

This is an uncharacterized protein from Staphylococcus aureus (strain MRSA252).